Reading from the N-terminus, the 1457-residue chain is Ras guanine nucleotide exchange factor C (1457 aa).

One copy of the RCC1 1 repeat lies at 1–55; the sequence is MSVFTFGHGSNGALGLGKITDDTCPTPQKVNYFTEIDKRVKKVACGSYHTVFVTD. Disordered regions lie at residues 75 to 196, 209 to 264, 282 to 313, and 376 to 404; these read FYTS…PLLN, HYES…RINK, EQQQ…DEDP, and QQQL…SLQT. Composition is skewed to low complexity over residues 83–121 and 134–158; these read TTTT…KIVN and SNTT…LPPT. Basic and acidic residues-rich tracts occupy residues 171–188 and 209–224; these read IKLD…ELIQ and HYES…KDNE. Positions 225-237 are enriched in acidic residues; it reads NENEEDEDDDDDD. Positions 238–249 are enriched in basic and acidic residues; sequence STIRQNEDKESS. 2 stretches are compositionally biased toward low complexity: residues 283–292 and 376–403; these read QQQQPQQPQQ and QQQL…SSLQ. RCC1 repeat units lie at residues 351–401, 432–483, 485–549, and 590–647; these read GGNV…SSSS, WGEL…CYTE, GKMY…VLTQ, and SGEV…ALVE. Residues 650–971 form the DH domain; sequence PKTKLALQLV…QVLLERMNQN (322 aa). A compositionally biased stretch (low complexity) spans 703 to 715; sequence LPPSLKGLSGGLP. Residues 703–762 are disordered; the sequence is LPPSLKGLSGGLPDNANNTIKNGKDKDNHHNGDSNGHHSNGHYHGNGNNGNNSITTSNSI. Over residues 724-738 the composition is skewed to basic and acidic residues; that stretch reads NGKDKDNHHNGDSNG. Over residues 739–762 the composition is skewed to low complexity; it reads HHSNGHYHGNGNNGNNSITTSNSI. The N-terminal Ras-GEF domain occupies 989-1109; the sequence is GNPQIMGGSL…SVSQIKLQYF (121 aa). The segment at 1127–1210 is disordered; it reads LTQNEITTPP…NNNNNNNNLT (84 aa). A coiled-coil region spans residues 1138–1211; the sequence is LQIQNNNQNN…NNNNNNNLTN (74 aa). The span at 1142-1210 shows a compositional bias: low complexity; it reads NNNQNNNLEN…NNNNNNNNLT (69 aa). The Ras-GEF domain occupies 1232 to 1454; it reads QPIEVAQTLT…DDKQAQKISS (223 aa).

Its function is as follows. Promotes the exchange of Ras-bound GDP by GTP. This Dictyostelium discoideum (Social amoeba) protein is Ras guanine nucleotide exchange factor C (gefC).